Consider the following 266-residue polypeptide: Putative pyruvate, phosphate dikinase regulatory protein (266 aa).

An ADP-binding site is contributed by 149–156; sequence GVSRTSKT.

This sequence belongs to the pyruvate, phosphate/water dikinase regulatory protein family. PDRP subfamily.

The catalysed reaction is N(tele)-phospho-L-histidyl/L-threonyl-[pyruvate, phosphate dikinase] + ADP = N(tele)-phospho-L-histidyl/O-phospho-L-threonyl-[pyruvate, phosphate dikinase] + AMP + H(+). The enzyme catalyses N(tele)-phospho-L-histidyl/O-phospho-L-threonyl-[pyruvate, phosphate dikinase] + phosphate + H(+) = N(tele)-phospho-L-histidyl/L-threonyl-[pyruvate, phosphate dikinase] + diphosphate. Bifunctional serine/threonine kinase and phosphorylase involved in the regulation of the pyruvate, phosphate dikinase (PPDK) by catalyzing its phosphorylation/dephosphorylation. In Geobacillus sp. (strain WCH70), this protein is Putative pyruvate, phosphate dikinase regulatory protein.